The following is a 319-amino-acid chain: Tryptophan--tRNA ligase (319 aa).

ATP contacts are provided by residues 8-10 (QPS) and 16-17 (GN). Residues 9–17 (PSGDLHIGN) carry the 'HIGH' region motif. Asp-131 is a binding site for L-tryptophan. Residues 143-145 (GKD), Val-182, and 189-193 (KMSKS) contribute to the ATP site. A 'KMSKS' region motif is present at residues 189–193 (KMSKS).

This sequence belongs to the class-I aminoacyl-tRNA synthetase family. Homodimer.

The protein resides in the cytoplasm. The enzyme catalyses tRNA(Trp) + L-tryptophan + ATP = L-tryptophyl-tRNA(Trp) + AMP + diphosphate + H(+). Catalyzes the attachment of tryptophan to tRNA(Trp). In Campylobacter jejuni subsp. jejuni serotype O:2 (strain ATCC 700819 / NCTC 11168), this protein is Tryptophan--tRNA ligase.